We begin with the raw amino-acid sequence, 315 residues long: piRNA biogenesis protein EXD1 (315 aa).

A 3'-5' exonuclease domain is found at 141–228 (IYIFDIQVMQ…ECLTNYLGLQ (88 aa)).

The protein belongs to the EXD1 family. Homodimer. Component of the PET complex, at least composed of EXD1, SIWI, TDRD12 and piRNAs.

The protein localises to the cytoplasm. In terms of biological role, RNA-binding component of the PET complex, a multiprotein complex required for the processing of piRNAs during spermatogenesis. The piRNA metabolic process mediates the repression of transposable elements during meiosis by forming complexes composed of piRNAs and Piwi proteins and governs the methylation and subsequent repression of transposable elements, preventing their mobilization, which is essential for the germline integrity. The PET complex is required during the secondary piRNAs metabolic process for the PIWIL2 slicing-triggered loading of PIWIL4 piRNAs. In the PET complex, EXD1 probably acts as an RNA adapter. EXD1 is an inactive exonuclease. The chain is piRNA biogenesis protein EXD1 from Bombyx mori (Silk moth).